A 69-amino-acid chain; its full sequence is Toxin CSTX-11 (69 aa).

Intrachain disulfides connect Cys-6–Cys-21, Cys-13–Cys-30, Cys-20–Cys-47, and Cys-32–Cys-45.

In terms of tissue distribution, expressed by the venom gland.

The protein localises to the secreted. It localises to the target cell membrane. Functionally, spider venom toxin that shows calcium channel blocking activity and exhibits cytolytic activity by affecting the outer leaflet curvature and/or pore formation across the membrane. It blocks L-type calcium channels (Cav1/CACNA1) in mammalian neurons at nanomolar concentrations. Furthermore, it produces a slow voltage-independent block of mid/low and high voltage-activated calcium channels in cockroach neurons. Potassium ions, histamine, M-ctenitoxin-Cs1a (AC P83619), CSTX-9 (AC P58604), and CSTX-13 (AC P83919) synergistically increase the insecticidal activity of this toxin. In vivo, it causes paralysis in blow flies and provokes death in drosophila. This Cupiennius salei (American wandering spider) protein is Toxin CSTX-11.